Here is a 653-residue protein sequence, read N- to C-terminus: Zinc finger protein 59 (653 aa).

The 73-residue stretch at 14 to 86 (VTFRDVAVDF…VNEETGRPSP (73 aa)) folds into the KRAB domain. 16 consecutive C2H2-type zinc fingers follow at residues 172-194 (YECKECGKCFGCRSTLTQHQSVH), 200-222 (YECKECGKAFRLPQQLTRHQKCH), 256-278 (FACRECGKSFNRVSSLVEHGLIH), 284-306 (YECNECGKAFKRHRSFVRHQKIH), 312-334 (FQCKDCGKGFIVLAHLTRHQSSH), 340-362 (FECEECGKKFRTARHLVKHQRIH), 368-390 (FECNVCGSAFRLQLYLSEHQKTH), 396-418 (LECNVCGKAFRLQVYLSEHLKTH), 424-446 (FKCKLCGSAFPNKYQLNKHLTVH), 452-474 (YQCKECGKCFRQRSKLTEHESIH), 480-502 (FQCEECGKFFRLNTLLIHHQKSH), 508-530 (FECKECGKAFLLPSQLNSHKIVH), 536-558 (FECKVCGKSFKRESNLIQHGAVH), 564-586 (YECSECGKGFIHRSSLFHHRKIH), 592-614 (FKCQECGKAFVVLAYLIQHQSIH), and 620-642 (FECELCGSAFRCRSQLNKHLRIH).

Belongs to the krueppel C2H2-type zinc-finger protein family. In terms of tissue distribution, expressed predominantly in the testis (at protein level).

The protein localises to the nucleus. Functionally, may have a role during differentiation processes. This Mus musculus (Mouse) protein is Zinc finger protein 59 (Zfp59).